The chain runs to 20 residues: Lysozyme (20 aa).

As to quaternary structure, monomer.

It localises to the secreted. The enzyme catalyses Hydrolysis of (1-&gt;4)-beta-linkages between N-acetylmuramic acid and N-acetyl-D-glucosamine residues in a peptidoglycan and between N-acetyl-D-glucosamine residues in chitodextrins.. Has bacteriolytic activity. This is Lysozyme from Lysobacter sp. (strain XL1).